A 197-amino-acid polypeptide reads, in one-letter code: Probable chemoreceptor glutamine deamidase CheD 2 (197 aa).

This sequence belongs to the CheD family.

It catalyses the reaction L-glutaminyl-[protein] + H2O = L-glutamyl-[protein] + NH4(+). Functionally, probably deamidates glutamine residues to glutamate on methyl-accepting chemotaxis receptors (MCPs), playing an important role in chemotaxis. The polypeptide is Probable chemoreceptor glutamine deamidase CheD 2 (Dechloromonas aromatica (strain RCB)).